A 33-amino-acid chain; its full sequence is GIMDTLKNLAKTAGKGALQSLLNKASCKLSGQC.

Residues Cys-27 and Cys-33 are joined by a disulfide bond.

This sequence belongs to the frog skin active peptide (FSAP) family. Brevinin subfamily. As to expression, expressed by the skin glands.

The protein localises to the secreted. Shows antibacterial activity against representative Gram-negative and Gram-positive bacterial species, and hemolytic activity. This Pelophylax lessonae (Pool frog) protein is Brevinin-2E.